Here is a 253-residue protein sequence, read N- to C-terminus: Small ribosomal subunit protein uS5 (253 aa).

The interval M1 to E30 is disordered. A compositionally biased stretch (basic residues) spans R14–A26. One can recognise an S5 DRBM domain in the interval L75–I138.

It belongs to the universal ribosomal protein uS5 family. Component of the small ribosomal subunit (SSU). Mature yeast ribosomes consist of a small (40S) and a large (60S) subunit. The 40S small subunit contains 1 molecule of ribosomal RNA (18S rRNA) and at least 33 different proteins. The large 60S subunit contains 3 rRNA molecules (25S, 5.8S and 5S rRNA) and at least 46 different proteins. Interacts with snoRNA U3. Interacts with MPP10. Component of the ribosomal small subunit (SSU) processome composed of at least 40 protein subunits and snoRNA U3.

It is found in the cytoplasm. In terms of biological role, component of the ribosome, a large ribonucleoprotein complex responsible for the synthesis of proteins in the cell. The small ribosomal subunit (SSU) binds messenger RNAs (mRNAs) and translates the encoded message by selecting cognate aminoacyl-transfer RNA (tRNA) molecules. The large subunit (LSU) contains the ribosomal catalytic site termed the peptidyl transferase center (PTC), which catalyzes the formation of peptide bonds, thereby polymerizing the amino acids delivered by tRNAs into a polypeptide chain. The nascent polypeptides leave the ribosome through a tunnel in the LSU and interact with protein factors that function in enzymatic processing, targeting, and the membrane insertion of nascent chains at the exit of the ribosomal tunnel. Plays a role in the assembly and function of the 40S ribosomal subunit. Mutations in this protein affects the control of translational fidelity. Involved in nucleolar processing of pre-18S ribosomal RNA and ribosome assembly. Component of the ribosome, a large ribonucleoprotein complex responsible for the synthesis of proteins in the cell. The small ribosomal subunit (SSU) binds messenger RNAs (mRNAs) and translates the encoded message by selecting cognate aminoacyl-transfer RNA (tRNA) molecules. The large subunit (LSU) contains the ribosomal catalytic site termed the peptidyl transferase center (PTC), which catalyzes the formation of peptide bonds, thereby polymerizing the amino acids delivered by tRNAs into a polypeptide chain. The nascent polypeptides leave the ribosome through a tunnel in the LSU and interact with protein factors that function in enzymatic processing, targeting, and the membrane insertion of nascent chains at the exit of the ribosomal tunnel. uS5 is important for the assembly and function of the 40S ribosomal subunit. Mutations in this protein affects the control of translational fidelity. Involved in nucleolar processing of pre-18S ribosomal RNA and ribosome assembly. This is Small ribosomal subunit protein uS5 (rps2) from Schizosaccharomyces pombe (strain 972 / ATCC 24843) (Fission yeast).